The sequence spans 325 residues: HTH-type transcriptional regulator VqsM (325 aa).

In terms of domain architecture, HTH araC/xylS-type spans 226–323 (QRIELFLDSI…GQSTTEFRNS (98 aa)). 2 DNA-binding regions (H-T-H motif) span residues 243-264 (VTTAKYLRMNERTVRRRLADEG) and 290-313 (VDRISDILGYSETASFRHAFRRWT).

Its function is as follows. Transcriptional regulator involved in both the repression (at least 99 genes, such as mexR and algU) and in the activation (at least 203 genes, such as mvfR, rsaL, vqsR and rpoS) of regulatory or putative regulatory proteins which are implicated in quorum sensing, virulence and multidrug resistance. This is HTH-type transcriptional regulator VqsM (vqsM) from Pseudomonas aeruginosa (strain ATCC 15692 / DSM 22644 / CIP 104116 / JCM 14847 / LMG 12228 / 1C / PRS 101 / PAO1).